Consider the following 353-residue polypeptide: Photosystem II protein D1 (353 aa).

Threonine 2 bears the N-acetylthreonine mark. Phosphothreonine is present on threonine 2. 3 helical membrane-spanning segments follow: residues tyrosine 29–serine 46, histidine 118–leucine 133, and tryptophan 142–alanine 156. Residue histidine 118 participates in chlorophyll a binding. Tyrosine 126 contacts pheophytin a. Positions 170 and 189 each coordinate [CaMn4O5] cluster. The helical transmembrane segment at phenylalanine 197 to leucine 218 threads the bilayer. A chlorophyll a-binding site is contributed by histidine 198. A quinone contacts are provided by residues histidine 215 and serine 264–phenylalanine 265. Position 215 (histidine 215) interacts with Fe cation. Histidine 272 is a Fe cation binding site. A helical membrane pass occupies residues phenylalanine 274–leucine 288. [CaMn4O5] cluster contacts are provided by histidine 332, glutamate 333, aspartate 342, and alanine 344. Positions alanine 345–glycine 353 are excised as a propeptide.

This sequence belongs to the reaction center PufL/M/PsbA/D family. As to quaternary structure, PSII is composed of 1 copy each of membrane proteins PsbA, PsbB, PsbC, PsbD, PsbE, PsbF, PsbH, PsbI, PsbJ, PsbK, PsbL, PsbM, PsbT, PsbX, PsbY, PsbZ, Psb30/Ycf12, at least 3 peripheral proteins of the oxygen-evolving complex and a large number of cofactors. It forms dimeric complexes. The D1/D2 heterodimer binds P680, chlorophylls that are the primary electron donor of PSII, and subsequent electron acceptors. It shares a non-heme iron and each subunit binds pheophytin, quinone, additional chlorophylls, carotenoids and lipids. D1 provides most of the ligands for the Mn4-Ca-O5 cluster of the oxygen-evolving complex (OEC). There is also a Cl(-1) ion associated with D1 and D2, which is required for oxygen evolution. The PSII complex binds additional chlorophylls, carotenoids and specific lipids. is required as a cofactor. In terms of processing, tyr-161 forms a radical intermediate that is referred to as redox-active TyrZ, YZ or Y-Z. C-terminally processed by CTPA; processing is essential to allow assembly of the oxygen-evolving complex and thus photosynthetic growth.

It is found in the plastid. The protein localises to the chloroplast thylakoid membrane. The catalysed reaction is 2 a plastoquinone + 4 hnu + 2 H2O = 2 a plastoquinol + O2. Its function is as follows. Photosystem II (PSII) is a light-driven water:plastoquinone oxidoreductase that uses light energy to abstract electrons from H(2)O, generating O(2) and a proton gradient subsequently used for ATP formation. It consists of a core antenna complex that captures photons, and an electron transfer chain that converts photonic excitation into a charge separation. The D1/D2 (PsbA/PsbD) reaction center heterodimer binds P680, the primary electron donor of PSII as well as several subsequent electron acceptors. The protein is Photosystem II protein D1 of Oryza nivara (Indian wild rice).